A 415-amino-acid chain; its full sequence is Chorismate synthase (415 aa).

The disordered stretch occupies residues 43-72 (EDLDRRKPGQSMITTSRGEPDKVSIKSGLQ). NADP(+) is bound at residue Arg48. FMN is bound by residues 125–127 (RSS), Gly304, 319–323 (HAPVS), and Arg346. Residues 262 to 310 (TDYTEDWEFGESEATASENASGDEPRARGDPKPVGNDHGGIQGGITTGD) are disordered. The segment covering 298–307 (DHGGIQGGIT) has biased composition (gly residues). The segment covering 379-393 (PDRLDDRPGEYDTDY) has biased composition (basic and acidic residues). Residues 379 to 415 (PDRLDDRPGEYDTDYHPSSPRNDPEDADTHATTVDED) form a disordered region.

The protein belongs to the chorismate synthase family. It depends on FMNH2 as a cofactor.

The catalysed reaction is 5-O-(1-carboxyvinyl)-3-phosphoshikimate = chorismate + phosphate. The protein operates within metabolic intermediate biosynthesis; chorismate biosynthesis; chorismate from D-erythrose 4-phosphate and phosphoenolpyruvate: step 7/7. Catalyzes the anti-1,4-elimination of the C-3 phosphate and the C-6 proR hydrogen from 5-enolpyruvylshikimate-3-phosphate (EPSP) to yield chorismate, which is the branch point compound that serves as the starting substrate for the three terminal pathways of aromatic amino acid biosynthesis. This reaction introduces a second double bond into the aromatic ring system. The polypeptide is Chorismate synthase (Halomicrobium mukohataei (strain ATCC 700874 / DSM 12286 / JCM 9738 / NCIMB 13541) (Haloarcula mukohataei)).